We begin with the raw amino-acid sequence, 564 residues long: Keratin, type II cytoskeletal 6B (564 aa).

Residues 1-11 (MASTSTTIRSH) are compositionally biased toward low complexity. The disordered stretch occupies residues 1-23 (MASTSTTIRSHSSSRRGFSANSA). Residue Ala-2 is modified to N-acetylalanine. A head region spans residues 2–162 (ASTSTTIRSH…DPAIQRVRAE (161 aa)). The coil 1A stretch occupies residues 163–198 (EREQIKTLNNKFASFIDKVRFLEQQNKVLDTKWTLL). One can recognise an IF rod domain in the interval 163-476 (EREQIKTLNN…KLLEGEECRL (314 aa)). Positions 199 to 217 (QEQGTKTVRQNLEPLFEQY) are linker 1. A coil 1B region spans residues 218–309 (INNLRRQLDN…ALYDAELSQM (92 aa)). The linker 12 stretch occupies residues 310 to 333 (QTHISDTSVVLSMDNNRNLDLDSI). A coil 2 region spans residues 334 to 472 (IAEVKAQYEE…ATYRKLLEGE (139 aa)). Positions 473–564 (ECRLNGEGVG…SSSSRKSYKH (92 aa)) are tail. Residues 533–564 (RATGGGLSSVGGGSSTIKYTTTSSSSRKSYKH) form a disordered region. The span at 534–546 (ATGGGLSSVGGGS) shows a compositional bias: gly residues. Residues 547–564 (STIKYTTTSSSSRKSYKH) show a composition bias toward low complexity.

It belongs to the intermediate filament family. In terms of assembly, heterodimer of a type I and a type II keratin. KRT6 isomers associate with KRT16 and/or KRT17. Constitutively expressed in distinct types of epithelia such as those in oral mucosa, esophagus, papillae of tongue and hair follicle outer root sheath.

The sequence is that of Keratin, type II cytoskeletal 6B (KRT6B) from Homo sapiens (Human).